The chain runs to 277 residues: 3-methyl-2-oxobutanoate hydroxymethyltransferase (277 aa).

The Mg(2+) site is built by Asp-43 and Asp-82. 3-methyl-2-oxobutanoate-binding positions include 43-44 (DS), Asp-82, and Lys-112. Residue Glu-114 coordinates Mg(2+). Glu-181 (proton acceptor) is an active-site residue.

It belongs to the PanB family. In terms of assembly, homodecamer; pentamer of dimers. It depends on Mg(2+) as a cofactor.

The protein localises to the cytoplasm. The enzyme catalyses 3-methyl-2-oxobutanoate + (6R)-5,10-methylene-5,6,7,8-tetrahydrofolate + H2O = 2-dehydropantoate + (6S)-5,6,7,8-tetrahydrofolate. Its pathway is cofactor biosynthesis; (R)-pantothenate biosynthesis; (R)-pantoate from 3-methyl-2-oxobutanoate: step 1/2. In terms of biological role, catalyzes the reversible reaction in which hydroxymethyl group from 5,10-methylenetetrahydrofolate is transferred onto alpha-ketoisovalerate to form ketopantoate. The sequence is that of 3-methyl-2-oxobutanoate hydroxymethyltransferase from Bacillus velezensis (strain DSM 23117 / BGSC 10A6 / LMG 26770 / FZB42) (Bacillus amyloliquefaciens subsp. plantarum).